The sequence spans 459 residues: Ribulose bisphosphate carboxylase large chain (459 aa).

Lys-4 bears the N6,N6,N6-trimethyllysine mark. Substrate contacts are provided by Asn-113 and Thr-163. The active-site Proton acceptor is the Lys-165. Residue Lys-167 coordinates substrate. Positions 191, 193, and 194 each coordinate Mg(2+). Lys-191 carries the post-translational modification N6-carboxylysine. His-284 serves as the catalytic Proton acceptor. Substrate-binding residues include Arg-285, His-317, and Ser-369.

Belongs to the RuBisCO large chain family. Type I subfamily. In terms of assembly, heterohexadecamer of 8 large chains and 8 small chains; disulfide-linked. The disulfide link is formed within the large subunit homodimers. It depends on Mg(2+) as a cofactor. In terms of processing, the disulfide bond which can form in the large chain dimeric partners within the hexadecamer appears to be associated with oxidative stress and protein turnover.

It is found in the plastid. It localises to the chloroplast. It catalyses the reaction 2 (2R)-3-phosphoglycerate + 2 H(+) = D-ribulose 1,5-bisphosphate + CO2 + H2O. It carries out the reaction D-ribulose 1,5-bisphosphate + O2 = 2-phosphoglycolate + (2R)-3-phosphoglycerate + 2 H(+). In terms of biological role, ruBisCO catalyzes two reactions: the carboxylation of D-ribulose 1,5-bisphosphate, the primary event in carbon dioxide fixation, as well as the oxidative fragmentation of the pentose substrate in the photorespiration process. Both reactions occur simultaneously and in competition at the same active site. The chain is Ribulose bisphosphate carboxylase large chain from Morus alba (White mulberry).